The primary structure comprises 919 residues: Isoleucine--tRNA ligase (919 aa).

A 'HIGH' region motif is present at residues 57 to 67; sequence PYANGHIHIGT. Residue E553 participates in L-isoleucyl-5'-AMP binding. The 'KMSKS' region motif lies at 594 to 598; that stretch reads KMSKS. Residue K597 coordinates ATP. Residues C887, C890, C907, and C910 each contribute to the Zn(2+) site.

The protein belongs to the class-I aminoacyl-tRNA synthetase family. IleS type 1 subfamily. As to quaternary structure, monomer. The cofactor is Zn(2+).

Its subcellular location is the cytoplasm. The enzyme catalyses tRNA(Ile) + L-isoleucine + ATP = L-isoleucyl-tRNA(Ile) + AMP + diphosphate. Its function is as follows. Catalyzes the attachment of isoleucine to tRNA(Ile). As IleRS can inadvertently accommodate and process structurally similar amino acids such as valine, to avoid such errors it has two additional distinct tRNA(Ile)-dependent editing activities. One activity is designated as 'pretransfer' editing and involves the hydrolysis of activated Val-AMP. The other activity is designated 'posttransfer' editing and involves deacylation of mischarged Val-tRNA(Ile). The sequence is that of Isoleucine--tRNA ligase from Thermotoga petrophila (strain ATCC BAA-488 / DSM 13995 / JCM 10881 / RKU-1).